The sequence spans 41 residues: Iota-conotoxin-like r11d (41 aa).

Intrachain disulfides connect Cys2–Cys16, Cys9–Cys19, Cys15–Cys24, and Cys18–Cys35. Pro8 bears the 4-hydroxyproline mark. Pro26 carries the post-translational modification 4-hydroxyproline.

In terms of processing, position 41 corresponds to a L-threonine, and not a D-threonine as firstly supposed. As to expression, expressed by the venom duct.

It localises to the secreted. Iota-conotoxins bind to voltage-gated sodium channels (Nav) and act as agonists by shifting the voltage-dependence of activation to more hyperpolarized levels. Both natural (L-Thr form) and synthetic (D-Thr form) peptides cause paralysis and death following intracranial injection and grooming and hypersensitivity upon intraperitoneal injection into mice. The L-Thr form of the peptide is 7-fold more potent than the D-Thr form. Both natural peptide (L-Thr form) and synthetic peptide (D-Thr form) are active on nerve, and on muscle. This Conus radiatus (Rayed cone) protein is Iota-conotoxin-like r11d.